Reading from the N-terminus, the 394-residue chain is G2/mitotic-specific cyclin-B2 (394 aa).

It belongs to the cyclin family. Cyclin AB subfamily. In terms of assembly, interacts with the CDK1 protein kinase to form a serine/threonine kinase holoenzyme complex also known as maturation promoting factor (MPF). The cyclin subunit imparts substrate specificity to the complex.

Essential for the control of the cell cycle at the G2/M (mitosis) transition. This Anguilla japonica (Japanese eel) protein is G2/mitotic-specific cyclin-B2 (ccnb2).